The sequence spans 693 residues: CREB-regulated transcription coactivator 2 (693 aa).

Residues 1–20 show a composition bias toward polar residues; sequence MATSGANGPGSATASASNPR. Residues 1-30 are disordered; it reads MATSGANGPGSATASASNPRKFSEKIALQK. Ala2 is modified (N-acetylalanine). Position 51 is an asymmetric dimethylarginine; by PRMT6 (Arg51). A phosphoserine mark is found at Ser70, Ser86, and Ser90. Asymmetric dimethylarginine; by PRMT6 is present on residues Arg99, Arg120, and Arg123. Ser136 is subject to Phosphoserine. Residues Arg161 and Arg168 each carry the asymmetric dimethylarginine; by PRMT6 modification. Thr169 carries the phosphothreonine modification. Phosphoserine; by AMPK, MARK2, SIK1 and SIK2 is present on Ser171. A Phosphothreonine modification is found at Thr192. Lys234 participates in a covalent cross-link: Glycyl lysine isopeptide (Lys-Gly) (interchain with G-Cter in SUMO2). A Nuclear export signal motif is present at residues 271-287; the sequence is TGGSLPDLTNLHFPPPL. Ser274 is modified (phosphoserine; by MARK2). 2 disordered regions span residues 282–306 and 328–554; these read HFPP…GGNS and GYDA…MSDF. Residues Ser306, Ser368, Ser393, Ser433, and Ser456 each carry the phosphoserine modification. Composition is skewed to low complexity over residues 331–378 and 386–415; these read APGL…SSLA and SLGH…GAPS. Residues 447–468 are compositionally biased toward polar residues; the sequence is SQQQLPKQFSPTMSPTLSSITQ. Tyr488 carries the phosphotyrosine modification. Ser489, Ser490, and Ser492 each carry phosphoserine. The span at 498 to 507 shows a compositional bias: polar residues; the sequence is QPHTPKSLQQ. Phosphothreonine is present on Thr501. Over residues 509–529 the composition is skewed to low complexity; the sequence is GLPSQSCSVQSSGGQPPGRQS. Phosphoserine is present on residues Ser613, Ser623, and Ser624.

The protein belongs to the TORC family. Binds, as a tetramer, through its N-terminal region, with the bZIP domain of CREB1. 'Arg-314' in the bZIP domain of CREB1 is essential for this interaction. Interaction, via its C-terminal, with TAF4, enhances recruitment of TAF4 to CREB1. Interacts with SIK2. Interacts with 14-3-3 proteins, YWHAB and YWHAG. Interacts (probably when phosphorylated at Ser-171) with YWHAE. Interacts with calmodulin-dependent catalytic subunit PPP3CA/calcineurin A. Interaction with COP1 mediates nuclear export and degradation of CRTC2. In terms of assembly, (Microbial infection) Interaction with the human T-cell leukemia virus type 1 (HTLV-1) Tax protein is essential for optimal transcription activation by Tax. Phosphorylation/dephosphorylation states of Ser-171 are required for regulating transduction of CREB activity. CRTCs/TORCs are inactive when phosphorylated, and active when dephosphorylated at this site. This primary site of phosphorylation, is regulated by cAMP and calcium levels and is dependent on the phosphorylation of SIKs (SIK1 and SIK2) by LKB1. Following adenylyl cyclase activation, dephosphorylated at Ser-171 by PPP3CA/calcineurin A resulting in CRTC2 dissociation from 14-3-3 proteins and PPP3CA. Both insulin and AMPK increase this phosphorylation of CRTC2 while glucagon suppresses it. Phosphorylation at Ser-274 by MARK2 is induced under low glucose conditions and dephosphorylated in response to glucose influx. Phosphorylation at Ser-274 promotes interaction with 14-3-3 proteins and translocation to the cytoplasm. In terms of processing, asymmetric dimethylation of arginine resisues by PRMT6 enhances the association of CRTC2 with CREB on the promoters of gluconeogenic genes. As to expression, most abundantly expressed in the thymus. Present in both B and T-lymphocytes. Highly expressed in HEK293T cells and in insulinomas. High levels also in spleen, ovary, muscle and lung, with highest levels in muscle. Lower levels found in brain, colon, heart, kidney, prostate, small intestine and stomach. Weak expression in liver and pancreas.

It localises to the cytoplasm. The protein resides in the nucleus. Transcriptional coactivator for CREB1 which activates transcription through both consensus and variant cAMP response element (CRE) sites. Acts as a coactivator, in the SIK/TORC signaling pathway, being active when dephosphorylated and acts independently of CREB1 'Ser-133' phosphorylation. Enhances the interaction of CREB1 with TAF4. Regulates gluconeogenesis as a component of the LKB1/AMPK/TORC2 signaling pathway. Regulates the expression of specific genes such as the steroidogenic gene, StAR. Potent coactivator of PPARGC1A and inducer of mitochondrial biogenesis in muscle cells. Also coactivator for TAX activation of the human T-cell leukemia virus type 1 (HTLV-1) long terminal repeats (LTR). This Homo sapiens (Human) protein is CREB-regulated transcription coactivator 2 (CRTC2).